Consider the following 131-residue polypeptide: MSWQTYVDDHLLCEIEGNHLTHAAILGQDGSVWAKSASFPQFKPEEITGIMNDFNEPGTLAPTGLYIGGTKYMVIQGEPGSVIRGKKGPGGVTVKKTNLALVIGIYDEPMTPGQCNMIVERLGDYLIEQGL.

It belongs to the profilin family. In terms of assembly, occurs in many kinds of cells as a complex with monomeric actin in a 1:1 ratio. As to expression, cytoplasmic distribution in hypocotyls. In root nodules, it is found in all cells, but is more abundant in the vascular tissue as well as the endodermis.

The protein localises to the cytoplasm. The protein resides in the cytoskeleton. Binds to actin and affects the structure of the cytoskeleton. At high concentrations, profilin prevents the polymerization of actin, whereas it enhances it at low concentrations. By binding to PIP2, it inhibits the formation of IP3 and DG. This is Profilin-1 from Phaseolus vulgaris (Kidney bean).